The primary structure comprises 118 residues: uncharacterized protein (118 aa).

The next 4 membrane-spanning stretches (helical) occupy residues 5-20 (IVFYLILLCLFISVVM), 25-42 (VIRTIANVICFIFVLLYF), 53-73 (ALAILSICFLFLVGICAFIIL), and 83-103 (LFFTGLETIAGILLIIVSLSI).

Its subcellular location is the cell membrane. This is an uncharacterized protein from Bacillus subtilis (strain 168).